A 463-amino-acid polypeptide reads, in one-letter code: Soluble pyridine nucleotide transhydrogenase (463 aa).

Glu35–Cys44 is an FAD binding site.

The protein belongs to the class-I pyridine nucleotide-disulfide oxidoreductase family. FAD is required as a cofactor.

The protein localises to the cytoplasm. The enzyme catalyses NAD(+) + NADPH = NADH + NADP(+). Functionally, conversion of NADPH, generated by peripheral catabolic pathways, to NADH, which can enter the respiratory chain for energy generation. This is Soluble pyridine nucleotide transhydrogenase from Chromohalobacter salexigens (strain ATCC BAA-138 / DSM 3043 / CIP 106854 / NCIMB 13768 / 1H11).